The chain runs to 349 residues: Dipeptide transport ATP-binding protein DppD (349 aa).

An ABC transporter domain is found at 7 to 258 (LEVKNLHVNF…PQHPYTWGLL (252 aa)). Residue 43 to 50 (GESGSGKS) participates in ATP binding.

Belongs to the ABC transporter superfamily. In terms of assembly, the complex is composed of two ATP-binding proteins (DppD and DppF), two transmembrane proteins (DppB and DppC) and a solute-binding protein (DppA).

The protein resides in the cell membrane. The catalysed reaction is a dipeptide(out) + ATP + H2O = a dipeptide(in) + ADP + phosphate + H(+). Functionally, part of the ABC transporter DppABCDF involved in dipeptide transport. Responsible for energy coupling to the transport system. The sequence is that of Dipeptide transport ATP-binding protein DppD from Lactococcus lactis subsp. cremoris (strain MG1363).